The chain runs to 142 residues: DNA-directed RNA polymerase subunit omega (142 aa).

The disordered stretch occupies residues 104-142 (FNTDADVDQESTDIQDDEVENEMSNQDSEDIDDEVDNEE). The span at 108–142 (ADVDQESTDIQDDEVENEMSNQDSEDIDDEVDNEE) shows a compositional bias: acidic residues.

The protein belongs to the RNA polymerase subunit omega family. As to quaternary structure, the RNAP catalytic core consists of 2 alpha, 1 beta, 1 beta' and 1 omega subunit. When a sigma factor is associated with the core the holoenzyme is formed, which can initiate transcription.

It catalyses the reaction RNA(n) + a ribonucleoside 5'-triphosphate = RNA(n+1) + diphosphate. Its function is as follows. Promotes RNA polymerase assembly. Latches the N- and C-terminal regions of the beta' subunit thereby facilitating its interaction with the beta and alpha subunits. This chain is DNA-directed RNA polymerase subunit omega, found in Wolbachia sp. subsp. Brugia malayi (strain TRS).